A 132-amino-acid polypeptide reads, in one-letter code: Small ribosomal subunit protein uS9 (132 aa).

The protein belongs to the universal ribosomal protein uS9 family.

The protein is Small ribosomal subunit protein uS9 of Leptospira interrogans serogroup Icterohaemorrhagiae serovar copenhageni (strain Fiocruz L1-130).